We begin with the raw amino-acid sequence, 337 residues long: MEQPWPPPGPWSLPRAEGEAEEESDLDLSPGSPRCPQLPGGGTQMYSHGIEMACQKQKEFVKSSVACKWNLAEAQQKLGSLALHNSESLDQEHAKAQTAISELRQREEEWRQKEEALVQRERMCLWNMDAISKDVFNKSFINQDKRKETEDEDKSKSFMQKHEQKIRHFGMLSRWDDSQRFLSDHPYLVCEETAKYLILWCFHLEAEQKGALMEQIAHQAVVMQFIMEMAKNCNVDPRGCFRLFFQKAKAEEEGYFEAFKNELEAFKSRVRLYSQSPNFQPVTVQNHVPHSGVGSIGLLESLPQNPDYLQYSINTALCSLNSVVHKEDDEPKMMDTV.

Over residues 1–11 the composition is skewed to pro residues; sequence MEQPWPPPGPW. Positions 1–43 are disordered; it reads MEQPWPPPGPWSLPRAEGEAEEESDLDLSPGSPRCPQLPGGGT. The interval 2-171 is self-association; that stretch reads EQPWPPPGPW…HEQKIRHFGM (170 aa). Phosphoserine occurs at positions 32 and 88. Residues 84 to 122 adopt a coiled-coil conformation; the sequence is HNSESLDQEHAKAQTAISELRQREEEWRQKEEALVQRER. The interval 147–277 is self-association and interaction with Hsp90; it reads KETEDEDKSK…SRVRLYSQSP (131 aa). Residues 267–337 are interaction with Hsp70; sequence KSRVRLYSQS…DDEPKMMDTV (71 aa). A required for interaction with STIP1 region spans residues 278–337; the sequence is NFQPVTVQNHVPHSGVGSIGLLESLPQNPDYLQYSINTALCSLNSVVHKEDDEPKMMDTV.

Belongs to the CDC37 family. As to quaternary structure, self-associates. Forms complexes with Hsp70 and Hsp90. Interacts with CDC37, FKBP4, PPID and STIP1.

Its subcellular location is the cytoplasm. Its function is as follows. Co-chaperone that binds to numerous proteins and promotes their interaction with Hsp70 and Hsp90. This chain is Hsp90 co-chaperone Cdc37-like 1 (CDC37L1), found in Bos taurus (Bovine).